The chain runs to 996 residues: Poly [ADP-ribose] polymerase (996 aa).

A DNA-binding region spans residues 1 to 369 (MEIDLPFKVE…TSTILKNISL (369 aa)). 2 consecutive PARP-type zinc fingers follow at residues 7-89 (FKVE…DNCT) and 114-203 (FGIE…PVIK). Zn(2+) contacts are provided by Cys-19, Cys-22, His-51, Cys-54, Cys-126, Cys-129, His-161, and Cys-164. Short sequence motifs (nuclear localization signal) lie at residues 211 to 214 (KKAK) and 232 to 235 (KIKK). The PADR1 zinc-binding domain maps to 220 to 358 (EEDAASIKEL…EVRAIRYIPP (139 aa)). The interval 286-329 (GALLPCTDCKGRQLLFHKSGYLCNGDLTEWTKCTKLLKEPERKS) is zinc ribbon. Cys-291, Cys-294, Cys-308, and Cys-318 together coordinate Zn(2+). The automodification domain stretch occupies residues 370-507 (KKGDELDGPK…SIYTKSVPKS (138 aa)). A BRCT domain is found at 382–473 (RERPPLYNIE…AGAINYISSM (92 aa)). The WGR domain occupies 527–625 (VAHVYVSRNK…ENFVKVAGRM (99 aa)). Residues 647-764 (KSKLPLSVQD…EIECAYSLLQ (118 aa)) enclose the PARP alpha-helical domain. Positions 773-996 (NPIDKHYEQL…YMLRMNFKYK (224 aa)) constitute a PARP catalytic domain.

This sequence belongs to the ARTD/PARP family.

Its subcellular location is the nucleus. The enzyme catalyses NAD(+) + (ADP-D-ribosyl)n-acceptor = nicotinamide + (ADP-D-ribosyl)n+1-acceptor + H(+).. It carries out the reaction L-aspartyl-[protein] + NAD(+) = 4-O-(ADP-D-ribosyl)-L-aspartyl-[protein] + nicotinamide. It catalyses the reaction L-glutamyl-[protein] + NAD(+) = 5-O-(ADP-D-ribosyl)-L-glutamyl-[protein] + nicotinamide. Its function is as follows. Poly-ADP-ribosyltransferase that mediates poly-ADP-ribosylation of proteins and plays a key role in DNA repair. Mainly mediates glutamate and aspartate ADP-ribosylation of target proteins: the ADP-D-ribosyl group of NAD(+) is transferred to the acceptor carboxyl group of glutamate and aspartate residues and further ADP-ribosyl groups are transferred to the 2'-position of the terminal adenosine moiety, building up a polymer with an average chain length of 20-30 units. This is Poly [ADP-ribose] polymerase from Sarcophaga peregrina (Flesh fly).